Here is a 265-residue protein sequence, read N- to C-terminus: Serine protease ami (265 aa).

The first 21 residues, Met1–Cys21, serve as a signal peptide directing secretion. The N-linked (GlcNAc...) asparagine glycan is linked to Asn2. The propeptide at Arg22–Arg26 is activation peptide. The Peptidase S1 domain occupies Ile27 to Tyr254. A disulfide bond links Cys52 and Cys68. The Charge relay system role is filled by His67. Asn71, Asn74, and Asn108 each carry an N-linked (GlcNAc...) asparagine glycan. Catalysis depends on Asp115, which acts as the Charge relay system. 3 disulfide bridges follow: Cys149/Cys215, Cys180/Cys196, and Cys205/Cys230. Ser209 (charge relay system) is an active-site residue. An N-linked (GlcNAc...) asparagine glycan is attached at Asn255.

This sequence belongs to the peptidase S1 family.

It localises to the secreted. Probable serine protease. This chain is Serine protease ami, found in Xenopus tropicalis (Western clawed frog).